The primary structure comprises 505 residues: Lysine--tRNA ligase (505 aa).

Positions 415 and 422 each coordinate Mg(2+).

It belongs to the class-II aminoacyl-tRNA synthetase family. In terms of assembly, homodimer. The cofactor is Mg(2+).

Its subcellular location is the cytoplasm. It carries out the reaction tRNA(Lys) + L-lysine + ATP = L-lysyl-tRNA(Lys) + AMP + diphosphate. In Xanthomonas axonopodis pv. citri (strain 306), this protein is Lysine--tRNA ligase.